Reading from the N-terminus, the 1116-residue chain is Surface layer protein (1116 aa).

An N-terminal signal peptide occupies residues 1-53; it reads MQDSGFKKKDRSTNIPQEQFVYTRGGEHKVMKKVVNSVLASALAITVAPMAFA. 3 SLH domains span residues 54 to 117, 118 to 181, and 182 to 231; these read AEDT…KLAQ, FNTT…RGVW, and PNSM…YGTD.

It localises to the secreted. The protein resides in the cell wall. It is found in the S-layer. This is Surface layer protein from Brevibacillus choshinensis.